The following is a 119-amino-acid chain: Hydrogenase maturation factor HypA (119 aa).

Residue His2 participates in Ni(2+) binding. Residues Cys73, Cys76, Cys89, and Cys92 each contribute to the Zn(2+) site.

It belongs to the HypA/HybF family.

In terms of biological role, involved in the maturation of [NiFe] hydrogenases. Required for nickel insertion into the metal center of the hydrogenase. The polypeptide is Hydrogenase maturation factor HypA (Cupriavidus necator (strain ATCC 17699 / DSM 428 / KCTC 22496 / NCIMB 10442 / H16 / Stanier 337) (Ralstonia eutropha)).